Reading from the N-terminus, the 376-residue chain is Pyrimidine monooxygenase RutA (376 aa).

Residues 61-62 (IK), N127, E136, 152-153 (RY), and S202 contribute to the FMN site.

This sequence belongs to the NtaA/SnaA/DszA monooxygenase family. RutA subfamily.

It carries out the reaction uracil + FMNH2 + NADH + O2 = (Z)-3-ureidoacrylate + FMN + NAD(+) + H2O + H(+). The enzyme catalyses thymine + FMNH2 + NADH + O2 = (Z)-2-methylureidoacrylate + FMN + NAD(+) + H2O + H(+). In terms of biological role, catalyzes the pyrimidine ring opening between N-3 and C-4 by an unusual flavin hydroperoxide-catalyzed mechanism, adding oxygen atoms in the process to yield ureidoacrylate peracid, that immediately reacts with FMN forming ureidoacrylate and FMN-N(5)-oxide. The FMN-N(5)-oxide reacts spontaneously with NADH to produce FMN. Requires the flavin reductase RutF to regenerate FMN in vivo. This chain is Pyrimidine monooxygenase RutA, found in Methylorubrum populi (strain ATCC BAA-705 / NCIMB 13946 / BJ001) (Methylobacterium populi).